Consider the following 217-residue polypeptide: Large ribosomal subunit protein uL3 (217 aa).

Positions 134 to 146 (GRATHGNSRSHNV) are enriched in polar residues. Residues 134–154 (GRATHGNSRSHNVPGSIGMAQ) form a disordered region. An N5-methylglutamine modification is found at Q154.

This sequence belongs to the universal ribosomal protein uL3 family. Part of the 50S ribosomal subunit. Forms a cluster with proteins L14 and L19. In terms of processing, methylated by PrmB.

In terms of biological role, one of the primary rRNA binding proteins, it binds directly near the 3'-end of the 23S rRNA, where it nucleates assembly of the 50S subunit. The protein is Large ribosomal subunit protein uL3 of Burkholderia lata (strain ATCC 17760 / DSM 23089 / LMG 22485 / NCIMB 9086 / R18194 / 383).